A 342-amino-acid polypeptide reads, in one-letter code: Peptide chain release factor 1 (342 aa).

Gln-211 carries the N5-methylglutamine modification. Residues Lys-262–Lys-282 are disordered.

The protein belongs to the prokaryotic/mitochondrial release factor family. In terms of processing, methylated by PrmC. Methylation increases the termination efficiency of RF1.

The protein localises to the cytoplasm. Peptide chain release factor 1 directs the termination of translation in response to the peptide chain termination codons UAG and UAA. The chain is Peptide chain release factor 1 (prfA) from Thermotoga maritima (strain ATCC 43589 / DSM 3109 / JCM 10099 / NBRC 100826 / MSB8).